The chain runs to 180 residues: Oligoribonuclease (180 aa).

In terms of domain architecture, Exonuclease spans 7–170 (LIWIDLEMTG…DDIRDSINEL (164 aa)). The active site involves Tyr128.

This sequence belongs to the oligoribonuclease family.

It localises to the cytoplasm. Its function is as follows. 3'-to-5' exoribonuclease specific for small oligoribonucleotides. The chain is Oligoribonuclease from Marinobacter nauticus (strain ATCC 700491 / DSM 11845 / VT8) (Marinobacter aquaeolei).